Reading from the N-terminus, the 529-residue chain is Bifunctional purine biosynthesis protein PurH (529 aa).

Residues 1 to 148 (MNNARPIRRA…KNHKDTTIIV (148 aa)) enclose the MGS-like domain.

It belongs to the PurH family.

The catalysed reaction is (6R)-10-formyltetrahydrofolate + 5-amino-1-(5-phospho-beta-D-ribosyl)imidazole-4-carboxamide = 5-formamido-1-(5-phospho-D-ribosyl)imidazole-4-carboxamide + (6S)-5,6,7,8-tetrahydrofolate. It catalyses the reaction IMP + H2O = 5-formamido-1-(5-phospho-D-ribosyl)imidazole-4-carboxamide. It functions in the pathway purine metabolism; IMP biosynthesis via de novo pathway; 5-formamido-1-(5-phospho-D-ribosyl)imidazole-4-carboxamide from 5-amino-1-(5-phospho-D-ribosyl)imidazole-4-carboxamide (10-formyl THF route): step 1/1. Its pathway is purine metabolism; IMP biosynthesis via de novo pathway; IMP from 5-formamido-1-(5-phospho-D-ribosyl)imidazole-4-carboxamide: step 1/1. The polypeptide is Bifunctional purine biosynthesis protein PurH (Shewanella piezotolerans (strain WP3 / JCM 13877)).